We begin with the raw amino-acid sequence, 193 residues long: ATP-dependent Clp protease proteolytic subunit 1 (193 aa).

The active-site Nucleophile is the S98. The active site involves H123.

The protein belongs to the peptidase S14 family. As to quaternary structure, fourteen ClpP subunits assemble into 2 heptameric rings which stack back to back to give a disk-like structure with a central cavity, resembling the structure of eukaryotic proteasomes.

The protein localises to the cytoplasm. The enzyme catalyses Hydrolysis of proteins to small peptides in the presence of ATP and magnesium. alpha-casein is the usual test substrate. In the absence of ATP, only oligopeptides shorter than five residues are hydrolyzed (such as succinyl-Leu-Tyr-|-NHMec, and Leu-Tyr-Leu-|-Tyr-Trp, in which cleavage of the -Tyr-|-Leu- and -Tyr-|-Trp bonds also occurs).. Its function is as follows. Cleaves peptides in various proteins in a process that requires ATP hydrolysis. Has a chymotrypsin-like activity. Plays a major role in the degradation of misfolded proteins. The protein is ATP-dependent Clp protease proteolytic subunit 1 of Bacillus cereus (strain ZK / E33L).